The chain runs to 125 residues: UPF0102 protein PA4424 (125 aa).

The protein belongs to the UPF0102 family.

The sequence is that of UPF0102 protein PA4424 from Pseudomonas aeruginosa (strain ATCC 15692 / DSM 22644 / CIP 104116 / JCM 14847 / LMG 12228 / 1C / PRS 101 / PAO1).